We begin with the raw amino-acid sequence, 204 residues long: Ribonuclease HII (204 aa).

The RNase H type-2 domain maps to 14–203; that stretch reads VGLCGVDEAG…VRLLLDQTSL (190 aa). A divalent metal cation-binding residues include aspartate 20, glutamate 21, and aspartate 112.

Belongs to the RNase HII family. Mn(2+) is required as a cofactor. Requires Mg(2+) as cofactor.

It is found in the cytoplasm. The enzyme catalyses Endonucleolytic cleavage to 5'-phosphomonoester.. Endonuclease that specifically degrades the RNA of RNA-DNA hybrids. This is Ribonuclease HII from Thiobacillus denitrificans (strain ATCC 25259 / T1).